The primary structure comprises 180 residues: MSFKGTTVIAIRRGGKTAVAADGQVTFGYTVLKSNAVKIRKLVNGRILAGFAGSTSDAITLFEKFEEKVKAREDGIIDIKRAAVELAKDWRSDKILHKLEAMMLVADSENILLISGTGDVVEPEEDVISIGSGGNYAYSAALAYMENKKLSAADIAFKSLKVAAKVCIYTNSNIVLEEIS.

The active site involves threonine 6. The Na(+) site is built by alanine 164, cysteine 167, and threonine 170.

Belongs to the peptidase T1B family. HslV subfamily. In terms of assembly, a double ring-shaped homohexamer of HslV is capped on each side by a ring-shaped HslU homohexamer. The assembly of the HslU/HslV complex is dependent on binding of ATP.

Its subcellular location is the cytoplasm. It catalyses the reaction ATP-dependent cleavage of peptide bonds with broad specificity.. Allosterically activated by HslU binding. Protease subunit of a proteasome-like degradation complex believed to be a general protein degrading machinery. The sequence is that of ATP-dependent protease subunit HslV from Borrelia hermsii (strain HS1 / DAH).